We begin with the raw amino-acid sequence, 430 residues long: Tol-Pal system protein TolB (430 aa).

A signal peptide spans 1–21 (MKQALRVAFGFLMLWAAVLHA).

Belongs to the TolB family. As to quaternary structure, the Tol-Pal system is composed of five core proteins: the inner membrane proteins TolA, TolQ and TolR, the periplasmic protein TolB and the outer membrane protein Pal. They form a network linking the inner and outer membranes and the peptidoglycan layer.

The protein localises to the periplasm. Part of the Tol-Pal system, which plays a role in outer membrane invagination during cell division and is important for maintaining outer membrane integrity. TolB occupies a key intermediary position in the Tol-Pal system because it communicates directly with both membrane-embedded components, Pal in the outer membrane and TolA in the inner membrane. This chain is Tol-Pal system protein TolB, found in Klebsiella pneumoniae (strain 342).